A 188-amino-acid chain; its full sequence is MATIIQAKDLRAGHTFLYKGSIYQVIENSFNKTAMREGIVKCKVKNLRTGAITVEVLTGEKVEQAIIEKSKMTFSYDDGSGYVFMDNETYEQISIPYNQLSWEKNFIEEGTEVSVMRYDGELMGVSLPDQLVVTIVEAEEAVQGNSVQNATKRAWLASKWEFQVPQFIKSGEKVIINPSNGQYVGRAK.

The protein belongs to the elongation factor P family.

Its subcellular location is the cytoplasm. It functions in the pathway protein biosynthesis; polypeptide chain elongation. Functionally, involved in peptide bond synthesis. Stimulates efficient translation and peptide-bond synthesis on native or reconstituted 70S ribosomes in vitro. Probably functions indirectly by altering the affinity of the ribosome for aminoacyl-tRNA, thus increasing their reactivity as acceptors for peptidyl transferase. The protein is Elongation factor P of Ureaplasma urealyticum serovar 10 (strain ATCC 33699 / Western).